We begin with the raw amino-acid sequence, 522 residues long: Glucose-1-phosphate adenylyltransferase large subunit, chloroplastic/amyloplastic (522 aa).

A chloroplast-targeting transit peptide spans 1-62 (MSSMQFSSVL…RGPAATGAQC (62 aa)). The span at 28-42 (SERLKVGDSSSIRHE) shows a compositional bias: basic and acidic residues. The tract at residues 28–54 (SERLKVGDSSSIRHERASRRMCNGGRG) is disordered.

Belongs to the bacterial/plant glucose-1-phosphate adenylyltransferase family. In terms of assembly, heterotetramer. Abundantly expressed in the whole grains, a slightly less abundant expression is seen in leaves, while a low level expression is seen in the roots. A greater expression is seen in the endosperm than in the embryo and pericarp layers.

The protein localises to the plastid. The protein resides in the chloroplast. It localises to the amyloplast. It catalyses the reaction alpha-D-glucose 1-phosphate + ATP + H(+) = ADP-alpha-D-glucose + diphosphate. The protein operates within glycan biosynthesis; starch biosynthesis. Insensitive to 3'phosphoglycerate and orthophosphate. Functionally, this protein plays a role in synthesis of starch. It catalyzes the synthesis of the activated glycosyl donor, ADP-glucose from Glc-1-P and ATP. The polypeptide is Glucose-1-phosphate adenylyltransferase large subunit, chloroplastic/amyloplastic (AGP-L) (Triticum aestivum (Wheat)).